Here is a 528-residue protein sequence, read N- to C-terminus: GMP synthase [glutamine-hydrolyzing] (528 aa).

Residues 13–204 (SILILDFGSQ…VYKISCCAAD (192 aa)) enclose the Glutamine amidotransferase type-1 domain. Cys90 (nucleophile) is an active-site residue. Catalysis depends on residues His178 and Glu180. The 199-residue stretch at 205-403 (WTTETYIEET…LGLPAEIIKR (199 aa)) folds into the GMPS ATP-PPase domain. 232 to 238 (SGGVDSS) serves as a coordination point for ATP.

Homodimer.

It catalyses the reaction XMP + L-glutamine + ATP + H2O = GMP + L-glutamate + AMP + diphosphate + 2 H(+). It functions in the pathway purine metabolism; GMP biosynthesis; GMP from XMP (L-Gln route): step 1/1. In terms of biological role, catalyzes the synthesis of GMP from XMP. This chain is GMP synthase [glutamine-hydrolyzing], found in Prochlorococcus marinus (strain MIT 9215).